Reading from the N-terminus, the 346-residue chain is Protein RecA (346 aa).

64 to 71 (GPESSGKT) provides a ligand contact to ATP.

It belongs to the RecA family.

The protein resides in the cytoplasm. Its function is as follows. Can catalyze the hydrolysis of ATP in the presence of single-stranded DNA, the ATP-dependent uptake of single-stranded DNA by duplex DNA, and the ATP-dependent hybridization of homologous single-stranded DNAs. It interacts with LexA causing its activation and leading to its autocatalytic cleavage. This chain is Protein RecA, found in Bacillus pumilus (strain SAFR-032).